The sequence spans 1199 residues: DNA-directed RNA polymerase subunit beta' (1199 aa).

Cys-60, Cys-62, Cys-75, and Cys-78 together coordinate Zn(2+). The Mg(2+) site is built by Asp-449, Asp-451, and Asp-453. 4 residues coordinate Zn(2+): Cys-818, Cys-892, Cys-899, and Cys-902.

The protein belongs to the RNA polymerase beta' chain family. In terms of assembly, RNAP is composed of a core of 2 alpha, a beta and a beta' subunit. The core is associated with a delta subunit, and at least one of epsilon or omega. When a sigma factor is associated with the core the holoenzyme is formed, which can initiate transcription. It depends on Mg(2+) as a cofactor. Zn(2+) is required as a cofactor.

The enzyme catalyses RNA(n) + a ribonucleoside 5'-triphosphate = RNA(n+1) + diphosphate. In terms of biological role, DNA-dependent RNA polymerase catalyzes the transcription of DNA into RNA using the four ribonucleoside triphosphates as substrates. This Bacillus subtilis (strain 168) protein is DNA-directed RNA polymerase subunit beta'.